A 280-amino-acid polypeptide reads, in one-letter code: Eukaryotic translation initiation factor 3 subunit F-1 (280 aa).

An MPN domain is found at 8 to 138 (VRVHPVVLFQ…LRAYVCIQLG (131 aa)).

This sequence belongs to the eIF-3 subunit F family. Component of the eukaryotic translation initiation factor 3 (eIF-3) complex. The eIF-3 complex interacts with pix.

Its subcellular location is the cytoplasm. In terms of biological role, component of the eukaryotic translation initiation factor 3 (eIF-3) complex, which is involved in protein synthesis of a specialized repertoire of mRNAs and, together with other initiation factors, stimulates binding of mRNA and methionyl-tRNAi to the 40S ribosome. The eIF-3 complex specifically targets and initiates translation of a subset of mRNAs involved in cell proliferation. This Drosophila willistoni (Fruit fly) protein is Eukaryotic translation initiation factor 3 subunit F-1.